We begin with the raw amino-acid sequence, 240 residues long: GATA transcription factor 4 (240 aa).

The tract at residues 104–124 (ISFTGKPRSRRSRAPAPSVAG) is disordered. The short motif at 109–116 (KPRSRRSR) is the Nuclear localization signal element. A GATA-type zinc finger spans residues 154-208 (ADGARRCTHCASEKTPQWRTGPLGPKTLCNACGVRYKSGRLVPEYRPASSPTFVL).

Belongs to the type IV zinc-finger family. Class A subfamily. As to expression, expressed in roots, flowers and leaves, and to a lower extent in stems.

It localises to the nucleus. Functionally, transcriptional activator that specifically binds 5'-GATA-3' or 5'-GAT-3' motifs within gene promoters. May be involved in the regulation of some light-responsive genes. This Arabidopsis thaliana (Mouse-ear cress) protein is GATA transcription factor 4 (GATA4).